The primary structure comprises 194 residues: Myelin-associated neurite-outgrowth inhibitor (194 aa).

Position 1 is an N-acetylmethionine (methionine 1). At 1–18 (MNPVYSPGSSGVPYANAK) the chain is on the cytoplasmic side. Serine 6 bears the Phosphoserine mark. A helical membrane pass occupies residues 19 to 41 (GIGYPAGFPVGYAAAPAYSPNMY). At 42–141 (PGANPTFQTG…PAPIPPPRGS (100 aa)) the chain is on the extracellular side. Asparagine 45 carries N-linked (GlcNAc...) asparagine glycosylation. Residues 142 to 163 (GVTMGMVAGTTMAMSAGTLLTA) form a helical membrane-spanning segment. At 164–194 (HSPTPVAPHPVTVPTYRAPGTPTYSYVPPQW) the chain is on the cytoplasmic side.

This sequence belongs to the FAM168 family. In terms of assembly, may form homodimers. May interact with DAZAP2, FAM168A, PRDX6, RBM6, TMTC1 and YPEL2. Interacts with CDC27. N-glycosylated. Predominantly expressed in the brain, including olfactory bulb, cortex and cerebellum (at protein level).

It localises to the cytoplasm. The protein resides in the perinuclear region. The protein localises to the cell membrane. Its subcellular location is the cell projection. It is found in the axon. Its function is as follows. Inhibitor of neuronal axonal outgrowth. Acts as a negative regulator of CDC42 and STAT3 and a positive regulator of STMN2. Positive regulator of CDC27. This is Myelin-associated neurite-outgrowth inhibitor (Fam168b) from Mus musculus (Mouse).